Consider the following 550-residue polypeptide: Selinene synthase (550 aa).

The Mg(2+) site is built by aspartate 314, aspartate 318, aspartate 450, and glutamate 458. The short motif at 314–318 (DDIYD) is the DDXXD motif element.

The protein belongs to the terpene synthase family. Mg(2+) is required as a cofactor. Mn(2+) serves as cofactor.

The catalysed reaction is (2E,6E)-farnesyl diphosphate = (+)-beta-selinene + diphosphate. The enzyme catalyses (2E,6E)-farnesyl diphosphate = alpha-selinene + diphosphate. It participates in secondary metabolite biosynthesis; terpenoid biosynthesis. In terms of biological role, sesquiterpene synthase that catalyzes the formation of alpha- and beta-selinene from trans,trans-farnesyl diphosphate (FPP). Also produces some nerolidol. The chain is Selinene synthase (SES) from Ocimum basilicum (Sweet basil).